Reading from the N-terminus, the 251-residue chain is Ubiquinone/menaquinone biosynthesis C-methyltransferase UbiE (251 aa).

Residues Thr74, Asp95, and 123–124 (NA) each bind S-adenosyl-L-methionine.

The protein belongs to the class I-like SAM-binding methyltransferase superfamily. MenG/UbiE family.

It catalyses the reaction a 2-demethylmenaquinol + S-adenosyl-L-methionine = a menaquinol + S-adenosyl-L-homocysteine + H(+). It carries out the reaction a 2-methoxy-6-(all-trans-polyprenyl)benzene-1,4-diol + S-adenosyl-L-methionine = a 5-methoxy-2-methyl-3-(all-trans-polyprenyl)benzene-1,4-diol + S-adenosyl-L-homocysteine + H(+). The protein operates within quinol/quinone metabolism; menaquinone biosynthesis; menaquinol from 1,4-dihydroxy-2-naphthoate: step 2/2. Its pathway is cofactor biosynthesis; ubiquinone biosynthesis. Its function is as follows. Methyltransferase required for the conversion of demethylmenaquinol (DMKH2) to menaquinol (MKH2) and the conversion of 2-polyprenyl-6-methoxy-1,4-benzoquinol (DDMQH2) to 2-polyprenyl-3-methyl-6-methoxy-1,4-benzoquinol (DMQH2). The protein is Ubiquinone/menaquinone biosynthesis C-methyltransferase UbiE of Shewanella frigidimarina (strain NCIMB 400).